A 443-amino-acid chain; its full sequence is 3-phosphoshikimate 1-carboxyvinyltransferase (443 aa).

3-phosphoshikimate-binding residues include Lys25, Ser26, and Arg30. Phosphoenolpyruvate is bound at residue Lys25. 2 residues coordinate phosphoenolpyruvate: Gly117 and Arg145. Positions 188, 189, 190, 217, 331, and 358 each coordinate 3-phosphoshikimate. Residue Gln190 coordinates phosphoenolpyruvate. Glu331 serves as the catalytic Proton acceptor. Arg362, Arg404, and Lys428 together coordinate phosphoenolpyruvate.

This sequence belongs to the EPSP synthase family. As to quaternary structure, monomer.

The protein localises to the cytoplasm. It carries out the reaction 3-phosphoshikimate + phosphoenolpyruvate = 5-O-(1-carboxyvinyl)-3-phosphoshikimate + phosphate. It participates in metabolic intermediate biosynthesis; chorismate biosynthesis; chorismate from D-erythrose 4-phosphate and phosphoenolpyruvate: step 6/7. In terms of biological role, catalyzes the transfer of the enolpyruvyl moiety of phosphoenolpyruvate (PEP) to the 5-hydroxyl of shikimate-3-phosphate (S3P) to produce enolpyruvyl shikimate-3-phosphate and inorganic phosphate. The chain is 3-phosphoshikimate 1-carboxyvinyltransferase from Tropheryma whipplei (strain TW08/27) (Whipple's bacillus).